Reading from the N-terminus, the 315-residue chain is Glycine--tRNA ligase alpha subunit (315 aa).

This sequence belongs to the class-II aminoacyl-tRNA synthetase family. Tetramer of two alpha and two beta subunits.

It localises to the cytoplasm. It carries out the reaction tRNA(Gly) + glycine + ATP = glycyl-tRNA(Gly) + AMP + diphosphate. The protein is Glycine--tRNA ligase alpha subunit of Pseudomonas putida (strain ATCC 47054 / DSM 6125 / CFBP 8728 / NCIMB 11950 / KT2440).